The chain runs to 729 residues: Neurochondrin (729 aa).

Serine 2 bears the N-acetylserine mark. Serine 2 bears the Phosphoserine mark. Serine 2 carries the N-acetylalanine modification. S-palmitoyl cysteine attachment occurs at residues cysteine 3 and cysteine 4. Arginine 75 is modified (asymmetric dimethylarginine). Serine 448 carries the post-translational modification Phosphoserine.

The protein belongs to the neurochondrin family. Interacts with MCHR1. Interacts with SEMA4C. Interacts with DIAPH1 (via FH3 domain). Interacts with GRM5. In terms of processing, palmitoylated. Palmitoylation by ZDHHC1, ZDHHC3 and ZDHHC11 regulates the association of NCDN with endosome membranes. May also be palmitoylated by ZDHHC7. In terms of tissue distribution, abundantly expressed in whole adult brain and in all individual brain regions examined, including spinal cord. Weakly expressed in ovary, testis, fetal brain and small intestine.

The protein resides in the cytoplasm. The protein localises to the cytosol. It is found in the endosome membrane. Its subcellular location is the cell projection. It localises to the dendrite. The protein resides in the postsynapse. In terms of biological role, probably involved in signal transduction in the nervous system, via increasing cell surface localization of GRM5/mGluR5 and positively regulating its signaling. Required for the spatial learning process. Acts as a negative regulator of Ca(2+)-calmodulin-dependent protein kinase 2 (CaMK2) phosphorylation. May play a role in modulating melanin-concentrating hormone-mediated functions via its interaction with MCHR1 that interferes with G protein-coupled signal transduction. May be involved in bone metabolism. May also be involved in neurite outgrowth. The sequence is that of Neurochondrin from Homo sapiens (Human).